The chain runs to 481 residues: UDP-glycosyltransferase 85A2 (481 aa).

UDP-alpha-D-glucose is bound by residues S303, 360-362, 377-385, and 399-402; these read CPQ, HCGWNSTLE, and FAEQ.

Belongs to the UDP-glycosyltransferase family. As to expression, expressed in roots, shoots, leaves and flowers.

This Arabidopsis thaliana (Mouse-ear cress) protein is UDP-glycosyltransferase 85A2 (UGT85A2).